Here is an 876-residue protein sequence, read N- to C-terminus: AP-5 complex subunit beta-1 (876 aa).

As to quaternary structure, probably part of the adaptor protein complex 5 (AP-5), a tetramer composed of AP5B1, AP5M1, AP5S1 and AP5Z1. Interacts with ZFYVE26 and SPG11.

Functionally, as part of AP-5, a probable fifth adaptor protein complex, it may be involved in endosomal transport. This is AP-5 complex subunit beta-1 (Ap5b1) from Rattus norvegicus (Rat).